A 189-amino-acid polypeptide reads, in one-letter code: Holliday junction branch migration complex subunit RuvA (189 aa).

The segment at 1–62 is domain I; sequence MIVALKGNIE…EEAWSLYGFA (62 aa). The tract at residues 63–138 is domain II; that stretch reads EEAEKRVFDT…FSLSLQEGSK (76 aa). Residues 138–139 are flexible linker; the sequence is KA. The tract at residues 140 to 189 is domain III; sequence STPPVFEESRLALESLGFKSELIAKALQNIQATTTQEIIKEALKKLQTLR.

Belongs to the RuvA family. As to quaternary structure, homotetramer. Forms an RuvA(8)-RuvB(12)-Holliday junction (HJ) complex. HJ DNA is sandwiched between 2 RuvA tetramers; dsDNA enters through RuvA and exits via RuvB. An RuvB hexamer assembles on each DNA strand where it exits the tetramer. Each RuvB hexamer is contacted by two RuvA subunits (via domain III) on 2 adjacent RuvB subunits; this complex drives branch migration. In the full resolvosome a probable DNA-RuvA(4)-RuvB(12)-RuvC(2) complex forms which resolves the HJ.

It localises to the cytoplasm. Functionally, the RuvA-RuvB-RuvC complex processes Holliday junction (HJ) DNA during genetic recombination and DNA repair, while the RuvA-RuvB complex plays an important role in the rescue of blocked DNA replication forks via replication fork reversal (RFR). RuvA specifically binds to HJ cruciform DNA, conferring on it an open structure. The RuvB hexamer acts as an ATP-dependent pump, pulling dsDNA into and through the RuvAB complex. HJ branch migration allows RuvC to scan DNA until it finds its consensus sequence, where it cleaves and resolves the cruciform DNA. This is Holliday junction branch migration complex subunit RuvA from Wolinella succinogenes (strain ATCC 29543 / DSM 1740 / CCUG 13145 / JCM 31913 / LMG 7466 / NCTC 11488 / FDC 602W) (Vibrio succinogenes).